Consider the following 339-residue polypeptide: Starvation-sensing protein RspB (339 aa).

Cys-37, His-59, Cys-89, Cys-92, Cys-95, Cys-103, and Glu-144 together coordinate Zn(2+).

Belongs to the zinc-containing alcohol dehydrogenase family. Zn(2+) is required as a cofactor.

In terms of biological role, not known; probable catabolic enzyme. In Escherichia coli (strain K12), this protein is Starvation-sensing protein RspB.